Consider the following 548-residue polypeptide: MAAKDVKFGNEARIKMLRGVNVLADAVKVTLGPKGRNVVLDKSFGAPSITKDGVSVAREIELEDKFENMGAQMVKEVASKANDAAGDGTTTATLLAQSIVNEGLKAVAAGMNPMDLKRGIDKAVISAVEELKNLSVPCSDSKAITQVGTISANADEKVGALIAEAMEKVGNDGVITVEEGTGLQNELEVVKGMQFDRGYLSPYFINKPETGIVELENPYILVADKKISNVREMLPILESVAKSGKPLLIISEDLEGEALATLVVNSMRGIVKVAAVKAPGFGDRRKAMLQDISILTGGSVISEELAMELEKSTLEDLGQAKRVVISKDTTTIIGGVGEKHTIQSRISQIRQEIQEATSDYDKEKLNERLAKLSGGVAVLKVGAATEVEMKEKKARVEDALHATRAAVEEGVVAGGGVALVRVAGKTSNLRGQNEDQNVGIRVALRAMEAPLRQIVSNSGEEPSVVTNNVKDGKGNYGYNAATDEYGDMIDFGILDPTKVTRSALQYAASVAGLMITTECMVTDLPKEDKSSDSNSSPAGGMGGMGGMM.

ATP is bound by residues 30–33, lysine 51, 87–91, glycine 415, 479–481, and aspartate 495; these read TLGP, DGTTT, and NAA. Positions 524 to 548 are disordered; it reads LPKEDKSSDSNSSPAGGMGGMGGMM. Gly residues predominate over residues 539–548; that stretch reads GGMGGMGGMM.

The protein belongs to the chaperonin (HSP60) family. In terms of assembly, forms a cylinder of 14 subunits composed of two heptameric rings stacked back-to-back. Interacts with the co-chaperonin GroES.

It localises to the cytoplasm. It carries out the reaction ATP + H2O + a folded polypeptide = ADP + phosphate + an unfolded polypeptide.. In terms of biological role, together with its co-chaperonin GroES, plays an essential role in assisting protein folding. The GroEL-GroES system forms a nano-cage that allows encapsulation of the non-native substrate proteins and provides a physical environment optimized to promote and accelerate protein folding. The sequence is that of Chaperonin GroEL from Buchnera aphidicola subsp. Myzus persicae (Myzus persicae primary endosymbiont).